The primary structure comprises 308 residues: Mycothiol acetyltransferase (308 aa).

N-acetyltransferase domains lie at 8–155 and 160–308; these read RDVD…PRLR and VQVR…RRAR. Glu-39 provides a ligand contact to 1D-myo-inositol 2-(L-cysteinylamino)-2-deoxy-alpha-D-glucopyranoside. 84–86 serves as a coordination point for acetyl-CoA; it reads LVV. Positions 187, 226, and 240 each coordinate 1D-myo-inositol 2-(L-cysteinylamino)-2-deoxy-alpha-D-glucopyranoside. Acetyl-CoA is bound by residues 244–246 and 251–257; these read LGI and QGLGLGR. Tyr-278 lines the 1D-myo-inositol 2-(L-cysteinylamino)-2-deoxy-alpha-D-glucopyranoside pocket.

Belongs to the acetyltransferase family. MshD subfamily. As to quaternary structure, monomer.

The enzyme catalyses 1D-myo-inositol 2-(L-cysteinylamino)-2-deoxy-alpha-D-glucopyranoside + acetyl-CoA = mycothiol + CoA + H(+). Its function is as follows. Catalyzes the transfer of acetyl from acetyl-CoA to desacetylmycothiol (Cys-GlcN-Ins) to form mycothiol. The chain is Mycothiol acetyltransferase from Geodermatophilus obscurus (strain ATCC 25078 / DSM 43160 / JCM 3152 / CCUG 61914 / KCC A-0152 / KCTC 9177 / NBRC 13315 / NRRL B-3577 / G-20).